Here is a 359-residue protein sequence, read N- to C-terminus: MPLSRLIVKQFRNIEACDIQPSSGFNFLIGANGSGKTSVLEAVYLLGHGRSFKSSLSGRIIQNECSELFVHGRFMTSDQFELPIGINKQRDGTTEVKISGQTGQKLAQLAQVLPLQLIHPEGFDLLTDGPKHRRAFIDWGVFHSESGFYDAWGRVKRLNKQRNALLKTATHYRELSYWDQELARLAESISQWRATYVEQLKEVAEEICATFLPEFEIKINYYRGWDKDTPYAEILEKNFERDQQLGYTFSGPNKADLKIKVNGTPVEDVLSRGQLKLMVCALRVAQGQHLTQMTGKQCIYLIDDFASELDSQRRARLAECLKATQAQVFVSSITADQIADMHDENSRMFHVEHGKIEQG.

Residue 30–37 (GANGSGKT) participates in ATP binding.

This sequence belongs to the RecF family.

It localises to the cytoplasm. Its function is as follows. The RecF protein is involved in DNA metabolism; it is required for DNA replication and normal SOS inducibility. RecF binds preferentially to single-stranded, linear DNA. It also seems to bind ATP. The chain is DNA replication and repair protein RecF from Vibrio atlanticus (strain LGP32) (Vibrio splendidus (strain Mel32)).